The primary structure comprises 122 residues: Acidic phospholipase A2 (122 aa).

7 cysteine pairs are disulfide-bonded: C26–C115, C28–C44, C43–C95, C49–C122, C50–C88, C57–C81, and C75–C86. Ca(2+)-binding residues include Y27, G29, and G31. H47 is a catalytic residue. D48 provides a ligand contact to Ca(2+). Residue D89 is part of the active site.

May form tetramers. The cofactor is Ca(2+). As to expression, expressed by the venom gland.

It localises to the secreted. It carries out the reaction a 1,2-diacyl-sn-glycero-3-phosphocholine + H2O = a 1-acyl-sn-glycero-3-phosphocholine + a fatty acid + H(+). In terms of biological role, PLA2 catalyzes the calcium-dependent hydrolysis of the 2-acyl groups in 3-sn-phosphoglycerides. In vivo, is non-lethal to mice when intravenously injected up to a concentration of 30 ug, however does show significant edematogenic activity at the injection site. This chain is Acidic phospholipase A2, found in Lachesis acrochorda (Chocoan bushmaster).